The sequence spans 700 residues: Polyribonucleotide nucleotidyltransferase (700 aa).

Mg(2+) is bound by residues Asp484 and Asp490. The region spanning 551–610 (PRVIRMVVDPEKIREIIGPGGKTISKIIAETGVKIDIEEDGRLYITASDLRSGERAKQMI) is the KH domain. The 69-residue stretch at 620-688 (GEIYLGKVLR…KLGRISLSRK (69 aa)) folds into the S1 motif domain.

This sequence belongs to the polyribonucleotide nucleotidyltransferase family. Mg(2+) is required as a cofactor.

It localises to the cytoplasm. The enzyme catalyses RNA(n+1) + phosphate = RNA(n) + a ribonucleoside 5'-diphosphate. Involved in mRNA degradation. Catalyzes the phosphorolysis of single-stranded polyribonucleotides processively in the 3'- to 5'-direction. This chain is Polyribonucleotide nucleotidyltransferase, found in Thermoanaerobacter sp. (strain X514).